A 69-amino-acid polypeptide reads, in one-letter code: DNA-directed RNA polymerase subunit omega (69 aa).

The protein belongs to the RNA polymerase subunit omega family. As to quaternary structure, the RNAP catalytic core consists of 2 alpha, 1 beta, 1 beta' and 1 omega subunit. When a sigma factor is associated with the core the holoenzyme is formed, which can initiate transcription.

The enzyme catalyses RNA(n) + a ribonucleoside 5'-triphosphate = RNA(n+1) + diphosphate. In terms of biological role, promotes RNA polymerase assembly. Latches the N- and C-terminal regions of the beta' subunit thereby facilitating its interaction with the beta and alpha subunits. This is DNA-directed RNA polymerase subunit omega from Heliobacterium modesticaldum (strain ATCC 51547 / Ice1).